Reading from the N-terminus, the 213-residue chain is Large ribosomal subunit protein uL3 (213 aa).

Residues 135 to 155 (THGSKNHRLPGSTGAGTTPGR) form a disordered region.

Belongs to the universal ribosomal protein uL3 family. In terms of assembly, part of the 50S ribosomal subunit. Forms a cluster with proteins L14 and L19.

One of the primary rRNA binding proteins, it binds directly near the 3'-end of the 23S rRNA, where it nucleates assembly of the 50S subunit. The polypeptide is Large ribosomal subunit protein uL3 (Synechocystis sp. (strain ATCC 27184 / PCC 6803 / Kazusa)).